Consider the following 938-residue polypeptide: Microperfuranone synthase (938 aa).

The interval 44-445 is adenylation (A) domain; the sequence is TSTRISYAEL…AGRTKDTIIV (402 aa). In terms of domain architecture, Carrier spans 579-655; it reads SDSERAVQKA…AIARSIDSSR (77 aa). The interval 581–652 is thiolation and peptide carrier (T) domain; that stretch reads SERAVQKALV…TPGAIARSID (72 aa). Position 613 is an O-(pantetheine 4'-phosphoryl)serine (Ser613). Residues 676 to 923 form a thioesterase (TE) domain region; that stretch reads PLFCIHPGSG…AKMLNREHIA (248 aa). Residue Ser746 is part of the active site.

This sequence belongs to the ATP-dependent AMP-binding enzyme family.

It functions in the pathway secondary metabolite biosynthesis. Its function is as follows. Microperfuranone synthase is the only protein required for the biosynthesis of the secondary metabolite microperfuranone from phenylpyruvic acid (PPA). Several steps for the microperfuranione biosynthesis have been proposed. These steps include the activation of PPA, by the micA adenylation (A) domain to AMP-phenylpyruvic acid followed by loading of the PPA unit to the thiolation and peptide carrier (T) domain and eventually transferring to the thioesterase (TE) domain. After loading another PPA unit onto the T domain, aldol condensation establishes the carbon-carbon bond between the alpha- and beta-carbon of the two PPA units. Sulfur-assisted furan ring formation, TE domain mediated hydrolysis, decarboxylation, and keto-enol tautomerization would generate microperfuranone attached to the T domain. Finally, microperfuranone is released by the TE domain. This is Microperfuranone synthase from Emericella nidulans (strain FGSC A4 / ATCC 38163 / CBS 112.46 / NRRL 194 / M139) (Aspergillus nidulans).